A 486-amino-acid polypeptide reads, in one-letter code: Ribulose bisphosphate carboxylase large chain (486 aa).

Substrate-binding residues include asparagine 125 and threonine 175. Lysine 177 serves as the catalytic Proton acceptor. A substrate-binding site is contributed by lysine 179. Residues lysine 203, aspartate 205, and glutamate 206 each coordinate Mg(2+). Lysine 203 bears the N6-carboxylysine mark. Histidine 295 serves as the catalytic Proton acceptor. 3 residues coordinate substrate: arginine 296, histidine 328, and serine 380.

It belongs to the RuBisCO large chain family. Type I subfamily. Heterohexadecamer of 8 large chains and 8 small chains. Mg(2+) serves as cofactor.

It catalyses the reaction 2 (2R)-3-phosphoglycerate + 2 H(+) = D-ribulose 1,5-bisphosphate + CO2 + H2O. It carries out the reaction D-ribulose 1,5-bisphosphate + O2 = 2-phosphoglycolate + (2R)-3-phosphoglycerate + 2 H(+). Its function is as follows. RuBisCO catalyzes two reactions: the carboxylation of D-ribulose 1,5-bisphosphate, the primary event in carbon dioxide fixation, as well as the oxidative fragmentation of the pentose substrate. Both reactions occur simultaneously and in competition at the same active site. This is Ribulose bisphosphate carboxylase large chain from Cereibacter sphaeroides (Rhodobacter sphaeroides).